A 124-amino-acid polypeptide reads, in one-letter code: NADH dehydrogenase [ubiquinone] 1 alpha subcomplex subunit 6 (124 aa).

This sequence belongs to the complex I LYR family.

It localises to the mitochondrion inner membrane. In terms of biological role, accessory subunit of the mitochondrial membrane respiratory chain NADH dehydrogenase (Complex I), that is believed to be not involved in catalysis. Complex I functions in the transfer of electrons from NADH to the respiratory chain. The immediate electron acceptor for the enzyme is believed to be ubiquinone. The protein is NADH dehydrogenase [ubiquinone] 1 alpha subcomplex subunit 6 (ndufa6) of Dictyostelium discoideum (Social amoeba).